A 735-amino-acid chain; its full sequence is Alpha-adducin (735 aa).

Residue Met1 is modified to N-acetylmethionine. The span at 1-11 (MNGDTRAAVVT) shows a compositional bias: low complexity. The disordered stretch occupies residues 1–21 (MNGDTRAAVVTSPPPTTAPHK). A Phosphoserine modification is found at Ser12. Phosphoserine; by PKA is present on Ser59. Ser64 carries the phosphoserine modification. Thr331 is modified (phosphothreonine). Phosphoserine is present on residues Ser334, Ser353, and Ser355. Thr358 is subject to Phosphothreonine. Phosphoserine occurs at positions 364 and 366. At Ser408 the chain carries Phosphoserine; by PKA. Disordered stretches follow at residues 418–486 (GHSF…SAVP) and 576–735 (RREV…KSDS). Phosphoserine is present on Ser427. Thr429 bears the Phosphothreonine mark. At Ser431 the chain carries Phosphoserine. At Ser436 the chain carries Phosphoserine; by PKA. Residue Thr445 is modified to Phosphothreonine; by ROCK2. A phosphoserine mark is found at Ser464 and Ser465. A Phosphothreonine; by ROCK2 modification is found at Thr480. Phosphoserine; by PKA is present on Ser481. Positions 576–601 (RREVERKQKGSEENLDETREQKEKSP) are enriched in basic and acidic residues. 3 positions are modified to phosphoserine: Ser586, Ser600, and Ser605. Residue Thr610 is modified to Phosphothreonine. A Phosphoserine modification is found at Ser613. Thr614 is subject to Phosphothreonine. The segment covering 678-712 (EPASASAPGAEEVASPATEEGSPMDPGSDGSPGKS) has biased composition (low complexity). Phosphoserine is present on residues Ser705, Ser708, and Ser712. The segment covering 713–735 (PSKKKKKFRTPSFLKKSKKKSDS) has biased composition (basic residues). Residue Ser714 is modified to Phosphoserine; by PKC. The interval 715-732 (KKKKKFRTPSFLKKSKKK) is interaction with calmodulin. Position 724 is a phosphoserine; by PKA and PKC (Ser724).

It belongs to the aldolase class II family. Adducin subfamily. In terms of assembly, heterodimer of an alpha and a beta subunit or an alpha and a gamma subunit.

The protein localises to the cytoplasm. It is found in the cytoskeleton. Its subcellular location is the cell membrane. Functionally, membrane-cytoskeleton-associated protein that promotes the assembly of the spectrin-actin network. Binds to calmodulin. The sequence is that of Alpha-adducin (Add1) from Rattus norvegicus (Rat).